A 1505-amino-acid chain; its full sequence is Homeobox protein cut-like 1 (1505 aa).

Residues 56–407 (LLKSFQGEID…ALRISNSDLS (352 aa)) adopt a coiled-coil conformation. Composition is skewed to polar residues over residues 396-407 (NAALRISNSDLS) and 440-451 (EQASNTNGTHQF). Disordered stretches follow at residues 396–455 (NAAL…SPAG), 512–552 (YSTN…EEMD), 646–669 (PKRR…GSDE), and 682–704 (LQVQ…NSDD). Low complexity predominate over residues 516–546 (SISSQSPLQQSPDVNGMAPSPSQSESAGSVS). Position 540 is a phosphoserine (Glu540). The segment at residues 542 to 629 (AGSVSEGEEM…ILALRSIQGR (88 aa)) is a DNA-binding region (CUT 1). A compositionally biased stretch (low complexity) spans 694 to 703 (SSASGSGNSD). Phosphoserine is present on Ser763. Positions 768–802 (SAAPEAGASALPNPPALKKEAQDAPGLDPQGAADC) are disordered. Glycyl lysine isopeptide (Lys-Gly) (interchain with G-Cter in SUMO2) cross-links involve residues Lys785, Lys811, and Lys842. A compositionally biased stretch (basic and acidic residues) spans 815-853 (GRSGAWKDHWWSAVQPERRNAASSEEAKAEETGGGKEKG). The tract at residues 815 to 930 (GRSGAWKDHW…KPTKPSVPPL (116 aa)) is disordered. 2 stretches are compositionally biased toward polar residues: residues 868–877 (SQLQGPSSSE) and 887–911 (SPYS…NSPL). A Phosphoserine modification is found at Ser909. Residues 934–1021 (QYEVYMYQEV…QGVLPVQGQQ (88 aa)) constitute a DNA-binding region (CUT 2). The segment covering 1036–1049 (LQQGCVSSESTPKT) has biased composition (polar residues). A disordered region spans residues 1036–1110 (LQQGCVSSES…QPTTPLPLSG (75 aa)). The segment covering 1050-1066 (SASCSPAPESPMSSSES) has biased composition (low complexity). Phosphoserine occurs at positions 1059 and 1069. Residues 1117–1204 (QELVAMSPEL…VEKLMDMKRM (88 aa)) constitute a DNA-binding region (CUT 3). The disordered stretch occupies residues 1210–1247 (MKRRHSSVSDSQPCEPPSVGTEYSQGASPQPQHQLKKP). A compositionally biased stretch (polar residues) spans 1230–1242 (TEYSQGASPQPQH). Positions 1244–1303 (LKKPRVVLAPEEKEALKRAYQQKPYPSPKTIEDLATQLNLKTSTVINWFHNYRSRIRREL) form a DNA-binding region, homeobox. Phosphoserine is present on Ser1270. A Glycyl lysine isopeptide (Lys-Gly) (interchain with G-Cter in SUMO2) cross-link involves residue Lys1284. Residues 1312 to 1480 (SQGQAGASDS…SRDNPLRKKK (169 aa)) are disordered. Residues 1316-1333 (AGASDSPSARSGRAAPSS) show a composition bias toward low complexity. At Ser1337 the chain carries Phosphoserine. Composition is skewed to basic and acidic residues over residues 1353 to 1368 (EEPK…EVPR) and 1384 to 1394 (DDARDDDHEGG). Low complexity-rich tracts occupy residues 1405-1436 (PASA…AAPS) and 1443-1455 (NSSS…RPSS). At Ser1455 the chain carries Phosphoserine. Residues 1467 to 1476 (GARDSRDNPL) are compositionally biased toward basic and acidic residues. 2 positions are modified to phosphoserine: Ser1486 and Ser1496.

The protein belongs to the CUT homeobox family. In terms of assembly, interacts with BANP. Interacts with SATB1 (via DNA-binding domains); the interaction inhibits the attachment of both proteins to DNA. Phosphorylated by PKA. In terms of processing, as cells progress into S phase, a fraction of CUX1 molecules is proteolytically processed into N-terminally truncated proteins of 110 kDa by CTSL. Cell cycle-dependent processing of CUX1 serves to generate a CDP/Cux p110 with distinct DNA binding and transcriptional properties.

The protein localises to the nucleus. Transcription factor involved in the control of neuronal differentiation in the brain. Regulates dendrite development and branching, and dendritic spine formation in cortical layers II-III. Also involved in the control of synaptogenesis. In addition, it has probably a broad role in mammalian development as a repressor of developmentally regulated gene expression. May act by preventing binding of positively-activing CCAAT factors to promoters. Component of nf-munr repressor; binds to the matrix attachment regions (MARs) (5' and 3') of the immunoglobulin heavy chain enhancer. Represses T-cell receptor (TCR) beta enhancer function by binding to MARbeta, an ATC-rich DNA sequence located upstream of the TCR beta enhancer. Binds to the TH enhancer; may require the basic helix-loop-helix protein TCF4 as a coactivator. In terms of biological role, plays a role in cell cycle progression, in particular at the G1/S transition. As cells progress into S phase, a fraction of CUX1 molecules is proteolytically processed into N-terminally truncated proteins of 110 kDa. While CUX1 only transiently binds to DNA and carries the CCAAT-displacement activity, CDP/Cux p110 makes a stable interaction with DNA and stimulates expression of genes such as POLA1. In Homo sapiens (Human), this protein is Homeobox protein cut-like 1.